A 170-amino-acid chain; its full sequence is Bifunctional protein PyrR (170 aa).

Residues 90-102 (LVLVDDVLMSGRT) carry the PRPP-binding motif.

The protein belongs to the purine/pyrimidine phosphoribosyltransferase family. PyrR subfamily.

It carries out the reaction UMP + diphosphate = 5-phospho-alpha-D-ribose 1-diphosphate + uracil. Regulates the transcription of the pyrimidine nucleotide (pyr) operon in response to exogenous pyrimidines. Its function is as follows. Also displays a weak uracil phosphoribosyltransferase activity which is not physiologically significant. The chain is Bifunctional protein PyrR from Pseudomonas paraeruginosa (strain DSM 24068 / PA7) (Pseudomonas aeruginosa (strain PA7)).